We begin with the raw amino-acid sequence, 449 residues long: Protein CapK (449 aa).

Its pathway is capsule biogenesis; capsule polysaccharide biosynthesis. In terms of biological role, required for the biosynthesis of type 1 capsular polysaccharide. The protein is Protein CapK (capK) of Staphylococcus aureus.